Reading from the N-terminus, the 312-residue chain is Cytoplasmic dynein intermediate light chain DYN3 (312 aa).

It belongs to the dynein light intermediate chain DYN3 family. The dynein complex consists of at least two heavy chains and a number of intermediate and light chains. Interacts with DYN1.

It is found in the cytoplasm. The protein localises to the cytoskeleton. Its function is as follows. Component of the cytoplasmic dynein which acts as a motor for the intracellular retrograde motility of vesicles and organelles along microtubules. May play an important role in the proper orientation of the mitotic spindle into the budding daughter cell yeast. Probably required for normal progression of the cell cycle. In Saccharomyces cerevisiae (strain ATCC 204508 / S288c) (Baker's yeast), this protein is Cytoplasmic dynein intermediate light chain DYN3 (DYN3).